Reading from the N-terminus, the 467-residue chain is ATP synthase subunit beta (467 aa).

156–163 (GGAGVGKT) contacts ATP.

It belongs to the ATPase alpha/beta chains family. As to quaternary structure, F-type ATPases have 2 components, CF(1) - the catalytic core - and CF(0) - the membrane proton channel. CF(1) has five subunits: alpha(3), beta(3), gamma(1), delta(1), epsilon(1). CF(0) has three main subunits: a(1), b(2) and c(9-12). The alpha and beta chains form an alternating ring which encloses part of the gamma chain. CF(1) is attached to CF(0) by a central stalk formed by the gamma and epsilon chains, while a peripheral stalk is formed by the delta and b chains.

Its subcellular location is the cell inner membrane. It carries out the reaction ATP + H2O + 4 H(+)(in) = ADP + phosphate + 5 H(+)(out). Its function is as follows. Produces ATP from ADP in the presence of a proton gradient across the membrane. The catalytic sites are hosted primarily by the beta subunits. This is ATP synthase subunit beta from Cupriavidus pinatubonensis (strain JMP 134 / LMG 1197) (Cupriavidus necator (strain JMP 134)).